The primary structure comprises 352 residues: MAHTGTATLINAERTDRTLRLLETFPSLTITIRQDTSGRDLVSSVYSATGMSAAARNLNPIANVKNMRQPGYVKPAHTATNTVPLRVATSTGLELPTAHLAQMPVDQALRDAVAAAVPAHAARVLPPNVDRVTPLTLASRVAMVCAGLDCDDIHEIAPAPTAMALAFTTKVLLIHVVVDGTGASIAVNPGAARDLLKADQLGNVITNYGYDVRGTVRRDTAAALAPSELPDTYPIEWLGLICGLIATQIELDLDMLAMNQTEQKLIAPHVQAVDPFINRLQSYATLSSRLMHLCVTHAQRPFRDFPELLRHWQKPELTPAIPVNIALKGAALEVSGNGAELFRVRALPIGGM.

It belongs to the aquareoviridae NS2 protein family. As to quaternary structure, homomultimer.

Protein that binds to ssRNA and may be involved in genome packaging. This chain is Non-structural protein 2 (S9), found in Aquareovirus C (isolate Golden shiner/USA/GSRV/1977) (AQRV-C).